Consider the following 113-residue polypeptide: Iron-sulfur cluster insertion protein ErpA (113 aa).

Iron-sulfur cluster contacts are provided by Cys41, Cys105, and Cys107.

Belongs to the HesB/IscA family. As to quaternary structure, homodimer. Requires iron-sulfur cluster as cofactor.

Required for insertion of 4Fe-4S clusters for at least IspG. In Vibrio vulnificus (strain CMCP6), this protein is Iron-sulfur cluster insertion protein ErpA.